The primary structure comprises 792 residues: Phenylalanine--tRNA ligase beta subunit (792 aa).

The region spanning 39-147 (GESLGQVVVA…DDAPVGQALA (109 aa)) is the tRNA-binding domain. The region spanning 400–475 (PQPVHIRLRR…RIHGYDRVPT (76 aa)) is the B5 domain. Positions 453, 459, 462, and 463 each coordinate Mg(2+). Residues 698–791 (SRFPSVRRDL…IEREHRARIR (94 aa)) enclose the FDX-ACB domain.

Belongs to the phenylalanyl-tRNA synthetase beta subunit family. Type 1 subfamily. In terms of assembly, tetramer of two alpha and two beta subunits. Mg(2+) serves as cofactor.

Its subcellular location is the cytoplasm. It catalyses the reaction tRNA(Phe) + L-phenylalanine + ATP = L-phenylalanyl-tRNA(Phe) + AMP + diphosphate + H(+). In Xanthomonas axonopodis pv. citri (strain 306), this protein is Phenylalanine--tRNA ligase beta subunit.